Reading from the N-terminus, the 563-residue chain is Ribulokinase (563 aa).

This sequence belongs to the ribulokinase family.

It carries out the reaction D-ribulose + ATP = D-ribulose 5-phosphate + ADP + H(+). The enzyme catalyses L-ribulose + ATP = L-ribulose 5-phosphate + ADP + H(+). Its pathway is carbohydrate degradation; L-arabinose degradation via L-ribulose; D-xylulose 5-phosphate from L-arabinose (bacterial route): step 2/3. The polypeptide is Ribulokinase (Halalkalibacterium halodurans (strain ATCC BAA-125 / DSM 18197 / FERM 7344 / JCM 9153 / C-125) (Bacillus halodurans)).